A 122-amino-acid chain; its full sequence is Large ribosomal subunit protein uL14 (122 aa).

This sequence belongs to the universal ribosomal protein uL14 family. In terms of assembly, part of the 50S ribosomal subunit. Forms a cluster with proteins L3 and L19. In the 70S ribosome, L14 and L19 interact and together make contacts with the 16S rRNA in bridges B5 and B8.

Binds to 23S rRNA. Forms part of two intersubunit bridges in the 70S ribosome. This is Large ribosomal subunit protein uL14 from Mycoplasma pneumoniae (strain ATCC 29342 / M129 / Subtype 1) (Mycoplasmoides pneumoniae).